The sequence spans 158 residues: 2-C-methyl-D-erythritol 2,4-cyclodiphosphate synthase (158 aa).

Positions 9 and 11 each coordinate a divalent metal cation. 4-CDP-2-C-methyl-D-erythritol 2-phosphate-binding positions include 9 to 11 (DVH) and 35 to 36 (HS). A divalent metal cation is bound at residue H43. Residues 57–59 (DIG), 62–66 (FPDTD), 101–107 (AQRPKMA), 133–136 (TTTE), F140, and R143 contribute to the 4-CDP-2-C-methyl-D-erythritol 2-phosphate site.

This sequence belongs to the IspF family. Homotrimer. The cofactor is a divalent metal cation.

The catalysed reaction is 4-CDP-2-C-methyl-D-erythritol 2-phosphate = 2-C-methyl-D-erythritol 2,4-cyclic diphosphate + CMP. It participates in isoprenoid biosynthesis; isopentenyl diphosphate biosynthesis via DXP pathway; isopentenyl diphosphate from 1-deoxy-D-xylulose 5-phosphate: step 4/6. Its function is as follows. Involved in the biosynthesis of isopentenyl diphosphate (IPP) and dimethylallyl diphosphate (DMAPP), two major building blocks of isoprenoid compounds. Catalyzes the conversion of 4-diphosphocytidyl-2-C-methyl-D-erythritol 2-phosphate (CDP-ME2P) to 2-C-methyl-D-erythritol 2,4-cyclodiphosphate (ME-CPP) with a corresponding release of cytidine 5-monophosphate (CMP). The sequence is that of 2-C-methyl-D-erythritol 2,4-cyclodiphosphate synthase from Lysinibacillus sphaericus (strain C3-41).